The primary structure comprises 266 residues: Imidazole glycerol phosphate synthase subunit HisF (266 aa).

Residues Asp11 and Asp130 contribute to the active site.

The protein belongs to the HisA/HisF family. Heterodimer of HisH and HisF.

The protein localises to the cytoplasm. The enzyme catalyses 5-[(5-phospho-1-deoxy-D-ribulos-1-ylimino)methylamino]-1-(5-phospho-beta-D-ribosyl)imidazole-4-carboxamide + L-glutamine = D-erythro-1-(imidazol-4-yl)glycerol 3-phosphate + 5-amino-1-(5-phospho-beta-D-ribosyl)imidazole-4-carboxamide + L-glutamate + H(+). The protein operates within amino-acid biosynthesis; L-histidine biosynthesis; L-histidine from 5-phospho-alpha-D-ribose 1-diphosphate: step 5/9. In terms of biological role, IGPS catalyzes the conversion of PRFAR and glutamine to IGP, AICAR and glutamate. The HisF subunit catalyzes the cyclization activity that produces IGP and AICAR from PRFAR using the ammonia provided by the HisH subunit. This Verminephrobacter eiseniae (strain EF01-2) protein is Imidazole glycerol phosphate synthase subunit HisF.